The sequence spans 265 residues: 5'-nucleotidase SurE (265 aa).

A divalent metal cation contacts are provided by Asp8, Asp9, Ser39, and Asn96.

Belongs to the SurE nucleotidase family. Requires a divalent metal cation as cofactor.

Its subcellular location is the cytoplasm. The enzyme catalyses a ribonucleoside 5'-phosphate + H2O = a ribonucleoside + phosphate. Its function is as follows. Nucleotidase that shows phosphatase activity on nucleoside 5'-monophosphates. This is 5'-nucleotidase SurE from Dehalococcoides mccartyi (strain ATCC BAA-2100 / JCM 16839 / KCTC 5957 / BAV1).